A 123-amino-acid polypeptide reads, in one-letter code: Sperm-associated antigen 11A (123 aa).

The first 25 residues, 1–25 (MRQRLLPSVTSLLLVALLFPGSSQA), serve as a signal peptide directing secretion. N-linked (GlcNAc...) asparagine glycosylation occurs at Asn29.

The protein belongs to the SPAG11 family.

It localises to the secreted. In terms of biological role, has antimicrobial activity against E.coli. Plays a role in the defense response in the male reproductive tract, contributing to sperm maturation, storage and protection. This chain is Sperm-associated antigen 11A, found in Homo sapiens (Human).